The primary structure comprises 135 residues: Protein Wnt-7c (135 aa).

Disulfide bonds link Cys-3/Cys-17 and Cys-5/Cys-12. Residue Ser-9 is the site of O-palmitoleoyl serine; by PORCN attachment. N-linked (GlcNAc...) asparagine glycosylation is found at Asn-62, Asn-85, and Asn-98. Disulfide bonds link Cys-81-Cys-112, Cys-97-Cys-107, and Cys-134-Cys-135.

It belongs to the Wnt family. In terms of processing, palmitoleoylation is required for efficient binding to frizzled receptors. Depalmitoleoylation leads to Wnt signaling pathway inhibition.

The protein resides in the secreted. It localises to the extracellular space. The protein localises to the extracellular matrix. In terms of biological role, ligand for members of the frizzled family of seven transmembrane receptors. Probable developmental protein. May be a signaling molecule which affects the development of discrete regions of tissues. Is likely to signal over only few cell diameters. This is Protein Wnt-7c (wnt7c) from Xenopus laevis (African clawed frog).